The sequence spans 120 residues: Large ribosomal subunit protein bL17 (120 aa).

It belongs to the bacterial ribosomal protein bL17 family. Part of the 50S ribosomal subunit. Contacts protein L32.

The chain is Large ribosomal subunit protein bL17 from Bacillus licheniformis (strain ATCC 14580 / DSM 13 / JCM 2505 / CCUG 7422 / NBRC 12200 / NCIMB 9375 / NCTC 10341 / NRRL NRS-1264 / Gibson 46).